The sequence spans 599 residues: Sulfite reductase [NADPH] flavoprotein alpha-component (599 aa).

In terms of domain architecture, Flavodoxin-like spans 64–202 (ITIISASQTG…AASEWRARVV (139 aa)). Residues 70 to 75 (SQTGNA), 117 to 120 (STQG), and 153 to 162 (LGDSSYEFFC) each bind FMN. An FAD-binding FR-type domain is found at 234 to 448 (DAPLAASLSV…IEHNDNFRLP (215 aa)). FAD is bound by residues threonine 322, alanine 356, 386–389 (RLYS), 404–406 (TVG), tyrosine 410, and 419–422 (GGAS). NADP(+)-binding positions include 519 to 520 (SR), 525 to 529 (KIYVQ), and aspartate 561. Tyrosine 599 serves as a coordination point for FAD.

It belongs to the NADPH-dependent sulphite reductase flavoprotein subunit CysJ family. The protein in the N-terminal section; belongs to the flavodoxin family. This sequence in the C-terminal section; belongs to the flavoprotein pyridine nucleotide cytochrome reductase family. As to quaternary structure, alpha(8)-beta(8). The alpha component is a flavoprotein, the beta component is a hemoprotein. Requires FAD as cofactor. FMN serves as cofactor.

It catalyses the reaction hydrogen sulfide + 3 NADP(+) + 3 H2O = sulfite + 3 NADPH + 4 H(+). It functions in the pathway sulfur metabolism; hydrogen sulfide biosynthesis; hydrogen sulfide from sulfite (NADPH route): step 1/1. Its function is as follows. Component of the sulfite reductase complex that catalyzes the 6-electron reduction of sulfite to sulfide. This is one of several activities required for the biosynthesis of L-cysteine from sulfate. The flavoprotein component catalyzes the electron flow from NADPH -&gt; FAD -&gt; FMN to the hemoprotein component. The sequence is that of Sulfite reductase [NADPH] flavoprotein alpha-component from Escherichia coli O6:K15:H31 (strain 536 / UPEC).